We begin with the raw amino-acid sequence, 346 residues long: Retinal homeobox protein Rx (346 aa).

The short motif at 33–40 (HSIEAILG) is the Octapeptide motif element. Disordered regions lie at residues 46–145 (GILG…TFTT) and 194–318 (QEKL…LDEA). Residues 55 to 67 (RGARGAKERDRRL) are compositionally biased toward basic and acidic residues. Residues 83-92 (PSPPPAPAPA) are compositionally biased toward pro residues. A DNA-binding region (homeobox) is located at residues 136–195 (HRRNRTTFTTYQLHELERAFEKSHYPDVYSREELAGKVNLPEVRVQVWFQNRRAKWRRQE). Low complexity predominate over residues 207 to 225 (SPLLSFSRSPPSATLSPLG). Residues 226–236 (AGPGSGGGPAG) show a composition bias toward gly residues. Low complexity predominate over residues 237–246 (GALPLESWLG). Positions 274–304 (YTPPPPPPPFLNSPPLGPGLQPLAPPPPSYP) are enriched in pro residues. Residues 323-336 (SSIAALRLKAKEHI) carry the OAR motif. The short motif at 329–333 (RLKAK) is the Nuclear localization signal element.

This sequence belongs to the paired homeobox family. Bicoid subfamily. In terms of tissue distribution, expressed in the developing eye and weakly expressed in the adult retina.

The protein resides in the nucleus. Functionally, plays a critical role in eye formation by regulating the initial specification of retinal cells and/or their subsequent proliferation. Binds to the photoreceptor conserved element-I (PCE-1/Ret 1) in the photoreceptor cell-specific arrestin promoter. The protein is Retinal homeobox protein Rx (RAX) of Homo sapiens (Human).